We begin with the raw amino-acid sequence, 961 residues long: G protein-coupled receptor GPR1 (961 aa).

Residues 1–56 (MITEGFPPNLNALKGSSLLEKRVDSLRQLNTTTVNQLLGLPGMTSTFTAPQLLQLR) lie on the Extracellular side of the membrane. The chain crosses the membrane as a helical span at residues 57–79 (IIAITASAVSLIAGCLGMFFLSK). The Cytoplasmic segment spans residues 80 to 91 (MDKRRKVFRHDL). Residues 92–114 (IAFLIICDFLKAFILMIYPMIIL) form a helical membrane-spanning segment. The Extracellular portion of the chain corresponds to 115–133 (INNSVYATPAFFNTLGWFT). The helical transmembrane segment at 134–156 (AFAIEGADMAIMIFAIHFAILIF) threads the bilayer. Residues 157–178 (KPNWKWRNKRSGNMEGGLYKKR) lie on the Cytoplasmic side of the membrane. Residues 179–198 (SYIWPITALVPAILASLAFI) form a helical membrane-spanning segment. Residues 199 to 250 (NYNKLNDDSDTTIILDNNNYNFPDSPRQGGYKPWSAWCYLPPKPYWYKIVLS) lie on the Extracellular side of the membrane. A helical membrane pass occupies residues 251–273 (WGPRYFIIIFIFAVYLSIYIFIT). Residues 274–619 (SESKRIKAQI…KKRRAQIQKN (346 aa)) lie on the Cytoplasmic side of the membrane. Serine 373 bears the Phosphoserine mark. The disordered stretch occupies residues 468 to 568 (AMYDNKNDNS…PADNIPTLSN (101 aa)). Residues 502–558 (NNNNDNDNDNNNSNNNNNNNNNNNNNNNNNNNNNNNNNNNNNNSNNIKNNVDNNNTN) are compositionally biased toward low complexity. A helical transmembrane segment spans residues 620–642 (LRAIFIYPLSYIGIWLFPIIADA). Topologically, residues 643–822 (LQYNHEIKHG…AMLNNITAEE (180 aa)) are extracellular. Residues 783 to 796 (DSNDNKRTESDETK) show a composition bias toward basic and acidic residues. Residues 783-805 (DSNDNKRTESDETKTNSSDRSLP) form a disordered region. A helical membrane pass occupies residues 823-843 (VEVPLFWRIIHHIPMLGGIDL). Over 844 to 961 (DELNRLLKIR…LIAFLRNGPL (118 aa)) the chain is Cytoplasmic. Serine 903 carries the phosphoserine modification.

The protein belongs to the G-protein coupled receptor GPR1/git3 family.

The protein localises to the cell membrane. Its function is as follows. Seems to associate with GPA2 and act as G protein-coupled receptor that senses glucose and controls filamentous growth. It acts upstream of adenylate cyclase and is required for glucose activation of cAMP synthesis in concert with a glucose phosphorylation-dependent mechanism. This Saccharomyces cerevisiae (strain ATCC 204508 / S288c) (Baker's yeast) protein is G protein-coupled receptor GPR1 (GPR1).